A 224-amino-acid polypeptide reads, in one-letter code: Deoxyribose-phosphate aldolase (224 aa).

Residue Asp-92 is the Proton donor/acceptor of the active site. The active-site Schiff-base intermediate with acetaldehyde is Lys-155. Catalysis depends on Lys-184, which acts as the Proton donor/acceptor.

This sequence belongs to the DeoC/FbaB aldolase family. DeoC type 1 subfamily.

It is found in the cytoplasm. The catalysed reaction is 2-deoxy-D-ribose 5-phosphate = D-glyceraldehyde 3-phosphate + acetaldehyde. It functions in the pathway carbohydrate degradation; 2-deoxy-D-ribose 1-phosphate degradation; D-glyceraldehyde 3-phosphate and acetaldehyde from 2-deoxy-alpha-D-ribose 1-phosphate: step 2/2. Functionally, catalyzes a reversible aldol reaction between acetaldehyde and D-glyceraldehyde 3-phosphate to generate 2-deoxy-D-ribose 5-phosphate. The polypeptide is Deoxyribose-phosphate aldolase (Clostridium perfringens (strain ATCC 13124 / DSM 756 / JCM 1290 / NCIMB 6125 / NCTC 8237 / Type A)).